The sequence spans 445 residues: MASTHQSSTEPSSTGKSEETKKDASQGSGQDSKNVTVTKGTGSSATSAAIVKTGGSQGKDSSTTAGSSSTQGQKFSTTPTDPKTFSSDQKEKSKSPAKEVPSGGDSKSQGDTKSQSDAKSSGQSQGQSKDSGKSSSDSSKSHSVIGAVKDVVAGAKDVAGKAVEDAPSIMHTAVDAVKNAATTVKDVASSAASTVAEKVVDAYHSVVGDKTDDKKEGEHSGDKKDDSKAGSGSGQGGDNKKSEGETSGQAESSSGNEGAAPAKGRGRGRPPAAAKGVAKGAAKGAAASKGAKSGAESSKGGEQSSGDIEMADASSKGGSDQRDSAATVGEGGASGSEGGAKKGRGRGAGKKADAGDTSAEPPRRSSRLTSSGTGAGSAPAAAKGGAKRAASSSSTPSNAKKQATGGAGKAAATKATAAKSAASKAPQNGAGAKKKGGKAGGRKRK.

Polar residues-rich tracts occupy residues 1-15 (MAST…SSTG) and 25-47 (SQGS…SATS). Disordered regions lie at residues 1–145 (MAST…HSVI) and 203–445 (YHSV…RKRK). Residues 61-73 (SSTTAGSSSTQGQ) show a composition bias toward low complexity. The span at 74-87 (KFSTTPTDPKTFSS) shows a compositional bias: polar residues. Basic and acidic residues predominate over residues 88-97 (DQKEKSKSPA). The segment covering 117-138 (DAKSSGQSQGQSKDSGKSSSDS) has biased composition (low complexity). The span at 207-228 (VGDKTDDKKEGEHSGDKKDDSK) shows a compositional bias: basic and acidic residues. The segment at 208-445 (GDKTDDKKEG…GGKAGGRKRK (238 aa)) is required and sufficient for DNA-binding and co-localization with nuclear DNA. Polar residues predominate over residues 245-256 (ETSGQAESSSGN). Low complexity predominate over residues 257–306 (EGAAPAKGRGRGRPPAAAKGVAKGAAKGAAASKGAKSGAESSKGGEQSSG). A compositionally biased stretch (gly residues) spans 329 to 338 (GEGGASGSEG). Residues 360 to 445 (EPPRRSSRLT…GGKAGGRKRK (86 aa)) form a required for nucleosome binding and for the protection of chromatin from hydroxyl radical-mediated DNA damage region. A compositionally biased stretch (low complexity) spans 367–431 (RLTSSGTGAG…ASKAPQNGAG (65 aa)). Positions 432-445 (AKKKGGKAGGRKRK) are enriched in basic residues.

The protein resides in the nucleus. In terms of biological role, unique chromatin-associating protein that contributes to the organism's exceptional tolerance to harsh environmental stresses. Binds with a higher affinity to nucleosomes than to free DNA. Protects chromatin from damage caused by hydroxyl radical-mediated cleavage induced by X-rays or treatment with hydrogen peroxide. Suppresses X-ray-induced DNA damage that includes single-strand breaks (SSBs) as well as more hazardous double-strand breaks (DSBs), and improves radiotolerance. Also shields DNA against reactive oxygen species (ROS). The chain is Damage suppressor protein from Ramazzottius varieornatus (Water bear).